Reading from the N-terminus, the 344-residue chain is MELEVRHLRALCAIADAGSLHRAARRLGVAQPTLSTQLTRIEQALGGPLFTRERTGCRPTPLGRTVLGRARPLLTDMNTLVREARAAAAGGDSRLRVGSTASRALAGWLRRLRRPGLEPTLQMDVSANALLRRVTDGQLDVAFVHEVEGCALHIPEDLRLRVLVEREPQFVMLPADHPAAARPVVRLADLADDRWMVDPTVDGEWDGVHRMLRAVGLNPRVLHGDYHTAASLVATGEVVTVCQPSSQSRPDTAVRRLYGDPLGVRLLLAGTRAELDAVFPALEDAYWEAARQSTAYREWLEGGGIRTLPRCPVAATGGGRVSCGRAEGSRSRRPRDVAPPRPIG.

The region spanning 1 to 60 (MELEVRHLRALCAIADAGSLHRAARRLGVAQPTLSTQLTRIEQALGGPLFTRERTGCRPT) is the HTH lysR-type domain. Positions 20–39 (LHRAARRLGVAQPTLSTQLT) form a DNA-binding region, H-T-H motif. The disordered stretch occupies residues 322 to 344 (SCGRAEGSRSRRPRDVAPPRPIG). The segment covering 327-338 (EGSRSRRPRDVA) has biased composition (basic and acidic residues).

It belongs to the LysR transcriptional regulatory family.

In terms of biological role, transcriptional activator of the gene (snpA) for the small neutral protease. This chain is Small neutral protease regulatory protein (mprR), found in Streptomyces lividans.